Consider the following 364-residue polypeptide: Dual-specificity RNA methyltransferase RlmN (364 aa).

Glu-93 functions as the Proton acceptor in the catalytic mechanism. The 239-residue stretch at 99 to 337 (EDDRGTLCIS…ATIRKTRGDD (239 aa)) folds into the Radical SAM core domain. A disulfide bridge connects residues Cys-106 and Cys-342. Cys-113, Cys-117, and Cys-120 together coordinate [4Fe-4S] cluster. S-adenosyl-L-methionine contacts are provided by residues 167–168 (GE), Ser-199, 221–223 (SLH), and Asn-299. The active-site S-methylcysteine intermediate is Cys-342.

The protein belongs to the radical SAM superfamily. RlmN family. [4Fe-4S] cluster is required as a cofactor.

It is found in the cytoplasm. It carries out the reaction adenosine(2503) in 23S rRNA + 2 reduced [2Fe-2S]-[ferredoxin] + 2 S-adenosyl-L-methionine = 2-methyladenosine(2503) in 23S rRNA + 5'-deoxyadenosine + L-methionine + 2 oxidized [2Fe-2S]-[ferredoxin] + S-adenosyl-L-homocysteine. It catalyses the reaction adenosine(37) in tRNA + 2 reduced [2Fe-2S]-[ferredoxin] + 2 S-adenosyl-L-methionine = 2-methyladenosine(37) in tRNA + 5'-deoxyadenosine + L-methionine + 2 oxidized [2Fe-2S]-[ferredoxin] + S-adenosyl-L-homocysteine. In terms of biological role, specifically methylates position 2 of adenine 2503 in 23S rRNA and position 2 of adenine 37 in tRNAs. m2A2503 modification seems to play a crucial role in the proofreading step occurring at the peptidyl transferase center and thus would serve to optimize ribosomal fidelity. The sequence is that of Dual-specificity RNA methyltransferase RlmN from Dichelobacter nodosus (strain VCS1703A).